A 118-amino-acid polypeptide reads, in one-letter code: MQWALAVLLAFLSPASQKSSNLEGRTKSVIRQTGSSAEITCDLAEGSNGYIHWYLHQEGKAPQRLQYYDSYNSKVVLESGVSPGKYYTYASTRNNLRLILRNLIENDFGVYYCATWDG.

The first 17 residues, 1–17, serve as a signal peptide directing secretion; it reads MQWALAVLLAFLSPASQ. The region spanning 18–118 is the Ig-like domain; that stretch reads KSSNLEGRTK…GVYYCATWDG (101 aa). An intrachain disulfide couples Cys41 to Cys113.

Gamma-delta TR is a heterodimer composed of a gamma and delta chain; disulfide-linked. The gamma-delta TR is associated with the transmembrane signaling CD3 coreceptor proteins following the stoichiometry: a single gamma-delta TR heterodimer associates with one CD3D-CD3E heterodimer, one CD3G-CD3E heterodimer and one CD247 homodimer forming a stable octameric structure. Upon activation, gamma-delta TR complex associates with FCER1G to initiate intracellular signaling.

The protein resides in the cell membrane. Functionally, v region of the variable domain of T cell receptor (TR) gamma chain that participates in the antigen recognition. Gamma-delta TRs recognize a variety of self and foreign non-peptide antigens frequently expressed at the epithelial boundaries between the host and external environment, including endogenous lipids presented by MH-like protein CD1D and phosphoantigens presented by butyrophilin-like molecule BTN3A1. Upon antigen recognition induces rapid, innate-like immune responses involved in pathogen clearance and tissue repair. Binding of gamma-delta TR complex to antigen triggers phosphorylation of immunoreceptor tyrosine-based activation motifs (ITAMs) in the CD3 chains by the LCK and FYN kinases, allowing the recruitment, phosphorylation, and activation of ZAP70 that facilitates phosphorylation of the scaffolding proteins LCP2 and LAT. This lead to the formation of a supramolecular signalosome that recruits the phospholipase PLCG1, resulting in calcium mobilization and ERK activation, ultimately leading to T cell expansion and differentiation into effector cells. Gamma-delta TRs are produced through somatic rearrangement of a limited repertoire of variable (V), diversity (D), and joining (J) genes. The potential diversity of gamma-delta TRs is conferred by the unique ability to rearrange (D) genes in tandem and to utilize all three reading frames. The combinatorial diversity is considerably increased by the sequence exonuclease trimming and random nucleotide (N) region additions which occur during the V-(D)-J rearrangements. This chain is T cell receptor gamma variable 2, found in Homo sapiens (Human).